The chain runs to 224 residues: Mammalian ependymin-related protein 1 (224 aa).

The N-terminal stretch at 1–37 is a signal peptide; the sequence is MPGRAPLRTVPGALGAWLLGGLWAWTLCGLCSLGAVG. Cystine bridges form between Cys-42–Cys-172, Cys-88–Cys-222, and Cys-113–Cys-210. N-linked (GlcNAc...) asparagine glycosylation is found at Asn-130 and Asn-182.

Belongs to the ependymin family. In terms of assembly, homodimer. In terms of processing, N-glycosylated; the glycan contains mannose-6-phosphate moieties. Ubiquitous. Detected in brain, heart, skeletal muscle, kidney, testis, ovary and prostate.

The protein localises to the lysosome lumen. It localises to the secreted. Binds anionic lipids and gangliosides at acidic pH. The polypeptide is Mammalian ependymin-related protein 1 (EPDR1) (Homo sapiens (Human)).